Here is a 483-residue protein sequence, read N- to C-terminus: Dihydrolipoyllysine-residue acetyltransferase component of pyruvate dehydrogenase complex, mitochondrial (483 aa).

The N-terminal 28 residues, 1-28 (MLSANMLRRMHHGVAVTRMLLVSNGKVQ), are a transit peptide targeting the mitochondrion. One can recognise a Lipoyl-binding domain in the interval 53–129 (HTVINMPALS…PVGKPLAVTV (77 aa)). At Lys-94 the chain carries N6-lipoyllysine. 2 disordered regions span residues 143–187 (IEDS…DRVF) and 234–254 (EAAA…APGD). Basic and acidic residues predominate over residues 146 to 160 (SSAKEPSAKSGEEKS). Polar residues predominate over residues 161 to 178 (APSSEKQSKETSSPSNVS). A Peripheral subunit-binding (PSBD) domain is found at 187-224 (FASPLARKLAEEKDLDLSQIRGSGPNGRIIKVDIENFK). Positions 235 to 252 (AAAKATTPAASAADAAAP) are enriched in low complexity. Catalysis depends on residues His-456 and Asp-460.

Belongs to the 2-oxoacid dehydrogenase family. (R)-lipoate serves as cofactor.

The protein localises to the mitochondrion matrix. The enzyme catalyses N(6)-[(R)-dihydrolipoyl]-L-lysyl-[protein] + acetyl-CoA = N(6)-[(R)-S(8)-acetyldihydrolipoyl]-L-lysyl-[protein] + CoA. Functionally, the pyruvate dehydrogenase complex catalyzes the overall conversion of pyruvate to acetyl-CoA and CO(2). It contains multiple copies of three enzymatic components: pyruvate dehydrogenase (E1), dihydrolipoamide acetyltransferase (E2) and lipoamide dehydrogenase (E3). This is Dihydrolipoyllysine-residue acetyltransferase component of pyruvate dehydrogenase complex, mitochondrial from Schizosaccharomyces pombe (strain 972 / ATCC 24843) (Fission yeast).